A 529-amino-acid chain; its full sequence is [Pyruvate dehydrogenase [acetyl-transferring]]-phosphatase 2, mitochondrial (529 aa).

The N-terminal 66 residues, 1–66 (MSSTVSYWIL…FTLCKAYRHT (66 aa)), are a transit peptide targeting the mitochondrion. The region spanning 106–517 (VLRFESNQLA…DDITVTVVYF (412 aa)) is the PPM-type phosphatase domain. Mn(2+) is bound by residues D141, G142, D412, and D508.

It belongs to the PP2C family. The cofactor is Mg(2+).

Its subcellular location is the mitochondrion. It carries out the reaction O-phospho-L-seryl-[pyruvate dehydrogenase E1 alpha subunit] + H2O = L-seryl-[pyruvate dehydrogenase E1 alpha subunit] + phosphate. Mitochondrial enzyme that catalyzes the dephosphorylation and concomitant reactivation of the alpha subunit of the E1 component of the pyruvate dehydrogenase complex (PDC), thereby stimulating the conversion of pyruvate into acetyl-CoA. Acts as a crucial regulator of T cell metabolism and function, with a particular focus on T-helper Th17. This chain is [Pyruvate dehydrogenase [acetyl-transferring]]-phosphatase 2, mitochondrial, found in Homo sapiens (Human).